An 803-amino-acid polypeptide reads, in one-letter code: MKISISWLREFLPNFSCETVSLVERLTFLGFEVEGVEESASLDRRIVVGRVLETEPHPNAERLTLCLVDVGREEPLRIVCGAPNVRAGMVVPVATEKAKLQFPDGQTLTIKPSKIRGERSQGMICAADELGLSNDHSGVMELESSWEIGKPFADYLESDVVLDIAVTPNRPDVLSHLGIARELADGAPLQYPSQQSLTYQPAGERIAINDAVACPYYTGVIIRGVTIRESPEWLRKRLQAIGLNPKNNIVDITNYMLHALGQPMHAFDCAKLAGERIAVRSDCQAEVVALNNLTYKVEGGMPVICDGSGAIAAIAGVMGGMASAVTESTTDIFLESALFHPSMVRRTAKKLALASDSSYRFERGVDSRMVQQASATAVALILELAGGTVECAMEQGSVAADLQLLALRPERTNKLLGTALSGEQMVELLERIGFRCVEQTTEQLLFAVPSFRVDVTAEIDLIEEVARLYGYNAIESSRQMATIYPTKRQHPAYFPDFLRGELITLGFREILTNPLIKRNDAALASEQLVDVLNPISEGLEVLRPSLLPGLLKVISHNIRHGNRDQKLFEVAHVFEAKPQVQQTQQPLEGYCEQERLVMAITGSRYLRRWNHPTDMVDFYDLSGAVEMLLEQLNILDKSVVNIYTPSALSIDVFLTEKGKRTTHRLGIMQPVNAAWLKHFDIEQEVYCAELDVALLERCYQPTSAYEPPSRFPVVERDISFIIPEGVSAQSLVELVQSSNPLIKTVTVFDRFERNHESGKECSIALSLTIADAKATLQDEKINDILATISRNAESKLGAVIRQV.

In terms of domain architecture, tRNA-binding spans A40–A153. Positions A400 to S476 constitute a B5 domain. Mg(2+) is bound by residues D454, D460, E463, and E464. Positions S709–R801 constitute an FDX-ACB domain.

This sequence belongs to the phenylalanyl-tRNA synthetase beta subunit family. Type 1 subfamily. As to quaternary structure, tetramer of two alpha and two beta subunits. Mg(2+) serves as cofactor.

It localises to the cytoplasm. It catalyses the reaction tRNA(Phe) + L-phenylalanine + ATP = L-phenylalanyl-tRNA(Phe) + AMP + diphosphate + H(+). This chain is Phenylalanine--tRNA ligase beta subunit, found in Chlorobium chlorochromatii (strain CaD3).